The primary structure comprises 1429 residues: Autophagy-related protein 11 (1429 aa).

Positions 71–99 (TQRSQPGASSPPLSELPLPRYNAHTPPNS) are disordered. Residues 80 to 89 (SPPLSELPLP) show a composition bias toward low complexity. 4 coiled-coil regions span residues 143–173 (VMLRCLDAAVANLENAVKGLENKYVELKEWS), 553–590 (DDLLRSLQADKTRLESKLKTAESRVRRLEDLLHRQTQA), 632–815 (LETL…LEDI), and 851–989 (EGDM…RLES). The segment at 1024–1061 (DGTMHIQRTPRSERSLATTANPNDSDPSSSLRRSSTLN) is disordered. Low complexity predominate over residues 1042–1061 (TANPNDSDPSSSLRRSSTLN). Residues 1105-1143 (ADAVYRRVKDVEHMARKLQREARAYREKAHSFQKEAHDK) are a coiled coil. Residues 1209 to 1229 (SKSLQHDQAGETRKDGARGET) show a composition bias toward basic and acidic residues. Disordered stretches follow at residues 1209–1241 (SKSLQHDQAGETRKDGARGETESLDDDENDNPF) and 1336–1429 (SSRG…LIGP). Residues 1230-1239 (ESLDDDENDN) are compositionally biased toward acidic residues. Composition is skewed to polar residues over residues 1345–1372 (ASETNSLRAVPADNNSSAPTNAAQQHMS) and 1383–1393 (QETPQQTNSIS).

The protein belongs to the ATG11 family. Homodimer.

The protein localises to the preautophagosomal structure membrane. It is found in the vacuole membrane. In terms of biological role, involved in cytoplasm to vacuole transport (Cvt), pexophagy, mitophagy and nucleophagy. Recruits mitochondria for their selective degradation via autophagy (mitophagy) during starvation. Works as scaffold proteins that recruit ATG proteins to the pre-autophagosome (PAS), the site of vesicle/autophagosome formation. Required for the Cvt vesicles completion. This chain is Autophagy-related protein 11 (apg-8), found in Neurospora crassa (strain ATCC 24698 / 74-OR23-1A / CBS 708.71 / DSM 1257 / FGSC 987).